A 709-amino-acid polypeptide reads, in one-letter code: MTVFKTAPLLIAALAASSCGGGGSGAAVDYDFNVRPSYLNDLRQASYDGAGNDLLTGGLGRSGLQDDSPPGYAGSQPTAEELRRNAIYVNYRALVDTTSEGGYGRLYGPNVDAQGRATSGEGMVAGTEAIAYSDDGSGRRNVTLMVQVPDAFDRTRPCIITATSSGSRGIYGGIPTGEWGLKRGCAVAYTDKGTGAAPHDLQADTVALIDGTRTSATLAGTRAAFDAGLSAADLAAFNGATPQRLAFKHAHSGQNPEKDWGLSTLQAVEFAFYVLNERFGDRSPGGQALRTFTPANTTVIASSLSNGGGAAIAAAEQDTRGLIDGVAVSEPSVQMPANAGVTVQRGGRTVAVNGLPLIDYTTQAHLYQACAALAPSLASTPFAAAFAVRFADPAFPVAANRCAGLKARGLLSAATTAAQAEEALARLTAYGWEPESGALHASLAAFEVAPSIAVTYANALSRASVQDRLCGYSFATTSAIGAVQPTPAAVTNTLFATGNGIPPTAGVQLVNDRSRGVPVRDLFSSNAAGVPTWNLEGALCLRSLVTGTDAAARRLQSGLDETRRTGNLQGKPAIIVHGRDDALIPVNHTSRPYAALNRRVEGAASRLSYIEVTNAQHFDAFIGLPATLPGYDSRYIPLHLYLNRALDAMYAHLVNGEPLPASQVVRTVPRGGTPGSAPAITAANVPPIAAMPVAADAVAITSGAIAVPD.

Residues 1-26 (MTVFKTAPLLIAALAASSCGGGGSGA) form the signal peptide. The disordered stretch occupies residues 58 to 77 (GLGRSGLQDDSPPGYAGSQP). The Charge relay system role is filled by serine 305.

Belongs to the D-(-)-3-hydroxybutyrate oligomer hydrolase family.

It localises to the secreted. The catalysed reaction is (3R)-hydroxybutanoate dimer + H2O = 2 (R)-3-hydroxybutanoate + H(+). It participates in lipid metabolism; butanoate metabolism. Participates in the degradation of poly-3-hydroxybutyrate (PHB). It works downstream of poly(3-hydroxybutyrate) depolymerase, hydrolyzing D(-)-3-hydroxybutyrate oligomers of various length (3HB-oligomers) into 3HB-monomers. This chain is D-(-)-3-hydroxybutyrate oligomer hydrolase, found in Paracidovorax citrulli (strain AAC00-1) (Acidovorax citrulli).